A 359-amino-acid polypeptide reads, in one-letter code: Protein Wnt-5a (359 aa).

The N-terminal stretch at 1–20 (MASRYLTLAAALLASFLQVD) is a signal peptide. C83 and C94 are oxidised to a cystine. N-linked (GlcNAc...) asparagine glycans are attached at residues N93 and N99. 10 disulfide bridges follow: C133/C141, C143/C161, C217/C231, C219/C226, C288/C319, C304/C314, C318/C358, C334/C349, C336/C346, and C341/C342. S223 is lipidated: O-palmitoleoyl serine; by PORCN. N-linked (GlcNAc...) asparagine glycans are attached at residues N291 and N305.

It belongs to the Wnt family. Post-translationally, palmitoleoylation is required for efficient binding to frizzled receptors. Depalmitoleoylation leads to Wnt signaling pathway inhibition.

It localises to the secreted. It is found in the extracellular space. The protein resides in the extracellular matrix. Ligand for members of the frizzled family of seven transmembrane receptors. Can activate or inhibit canonical Wnt signaling, depending on receptor context. Required during embryogenesis for extension of the primary anterior-posterior axis. The sequence is that of Protein Wnt-5a (WNT5A) from Pleurodeles waltl (Iberian ribbed newt).